The primary structure comprises 197 residues: Casparian strip membrane protein 4 (197 aa).

Topologically, residues 1–34 (MMSSTTIDVPAESSNVAKGKAVLVAAPRPGGWKK) are cytoplasmic. A helical membrane pass occupies residues 35–55 (GIAIVDFVLRLGAVAAALGAA). Over 56–85 (TTMATADQTLPFFTQFFQFEASYDSFTTFQ) the chain is Extracellular. Residues 86–106 (FFVITMALVGCYLVLSLPLSI) traverse the membrane as a helical segment. At 107–118 (VSIIRPHALGPK) the chain is on the cytoplasmic side. Residues 119–139 (LFLIILDTVFLTLATASAASA) traverse the membrane as a helical segment. The Extracellular portion of the chain corresponds to 140–171 (AAVVYVAHNGNQDSNWLAICNQFGDFCAQTSG). A helical membrane pass occupies residues 172–192 (AVVSSLVAVVVFVLLIVMSAL). Over 193-197 (ALGKH) the chain is Cytoplasmic.

Belongs to the Casparian strip membrane proteins (CASP) family. Homodimer and heterodimers.

The protein localises to the cell membrane. Regulates membrane-cell wall junctions and localized cell wall deposition. Required for establishment of the Casparian strip membrane domain (CSD) and the subsequent formation of Casparian strips, a cell wall modification of the root endodermis that determines an apoplastic barrier between the intraorganismal apoplasm and the extraorganismal apoplasm and prevents lateral diffusion. This is Casparian strip membrane protein 4 from Lotus japonicus (Lotus corniculatus var. japonicus).